We begin with the raw amino-acid sequence, 323 residues long: NADH-ubiquinone oxidoreductase chain 1 (323 aa).

The next 8 helical transmembrane spans lie at 8–28, 74–94, 105–125, 150–170, 176–196, 227–247, 258–278, and 298–318; these read LLNPLAVIIPILLAVAFLTLI, LLFITTPMLALTMALTLWLPL, LGMLFILAISSLTVYSILGSG, SLGLILLAMIIFAGGFTLTTF, TIWLLTPGWPLAAMWYISTLA, LFFLAEYANILLMNTLSTILF, ELTSINLMIKASALSMLFLWV, and FLPITLAMILWHTSLPIFTGS.

The protein belongs to the complex I subunit 1 family.

It is found in the mitochondrion inner membrane. It catalyses the reaction a ubiquinone + NADH + 5 H(+)(in) = a ubiquinol + NAD(+) + 4 H(+)(out). Functionally, core subunit of the mitochondrial membrane respiratory chain NADH dehydrogenase (Complex I) that is believed to belong to the minimal assembly required for catalysis. Complex I functions in the transfer of electrons from NADH to the respiratory chain. The immediate electron acceptor for the enzyme is believed to be ubiquinone. This Latimeria chalumnae (Coelacanth) protein is NADH-ubiquinone oxidoreductase chain 1 (MT-ND1).